Consider the following 1380-residue polypeptide: Tripeptidyl-peptidase 2 (1380 aa).

The Peptidase S8 domain maps to Ser-110 to Tyr-619. Active-site charge relay system residues include Asp-145, His-372, and Ser-558. The tract at residues Asp-1099–Arg-1143 is disordered. Positions Pro-1110–Pro-1120 are enriched in low complexity. 2 coiled-coil regions span residues Lys-1152–Tyr-1181 and Glu-1238–Lys-1300.

This sequence belongs to the peptidase S8 family. Assembles into a large oligomeric complex containing two related proteins 153 and 142 kDa that are derived from the single TPP2 gene. The 142 kDa form mainly differs from the 153 kDa form by a truncation at the C-terminal end.

The catalysed reaction is Release of an N-terminal tripeptide from a polypeptide.. Its activity is regulated as follows. Inhibited by alanine-alanine-phenylalanine-chloromethylketone, butabindide and phenylmethanesulfonyl fluoride (PMSF), but not by leupeptin, N-ethylmaleimide, EDTA, MG132 and lactacystin. Serine protease of the proteasome pathway that may function with the 20S proteasome to degrade oxidized proteins generated by environmental stress. The protein is Tripeptidyl-peptidase 2 (TPP2) of Arabidopsis thaliana (Mouse-ear cress).